Reading from the N-terminus, the 452-residue chain is Tubulin alpha-1 chain (452 aa).

A GTP-binding site is contributed by Gln11. Lys40 carries the N6-acetyllysine modification. Glu71, Gly144, Thr145, Thr179, Asn206, and Asn228 together coordinate GTP. Glu71 serves as a coordination point for Mg(2+). Glu254 is an active-site residue. Positions 430–452 are disordered; that stretch reads KDYEEVGAESGDGDDDGLGEEEY. Acidic residues predominate over residues 431 to 452; the sequence is DYEEVGAESGDGDDDGLGEEEY.

It belongs to the tubulin family. As to quaternary structure, dimer of alpha and beta chains. A typical microtubule is a hollow water-filled tube with an outer diameter of 25 nm and an inner diameter of 15 nM. Alpha-beta heterodimers associate head-to-tail to form protofilaments running lengthwise along the microtubule wall with the beta-tubulin subunit facing the microtubule plus end conferring a structural polarity. Microtubules usually have 13 protofilaments but different protofilament numbers can be found in some organisms and specialized cells. Mg(2+) is required as a cofactor. Undergoes a tyrosination/detyrosination cycle, the cyclic removal and re-addition of a C-terminal tyrosine residue by the enzymes tubulin tyrosine carboxypeptidase (TTCP) and tubulin tyrosine ligase (TTL), respectively. In terms of processing, acetylation of alpha chains at Lys-40 stabilizes microtubules and affects affinity and processivity of microtubule motors. This modification has a role in multiple cellular functions, ranging from cell motility, cell cycle progression or cell differentiation to intracellular trafficking and signaling.

The protein resides in the cytoplasm. The protein localises to the cytoskeleton. It carries out the reaction GTP + H2O = GDP + phosphate + H(+). Tubulin is the major constituent of microtubules, a cylinder consisting of laterally associated linear protofilaments composed of alpha- and beta-tubulin heterodimers. Microtubules grow by the addition of GTP-tubulin dimers to the microtubule end, where a stabilizing cap forms. Below the cap, tubulin dimers are in GDP-bound state, owing to GTPase activity of alpha-tubulin. The protein is Tubulin alpha-1 chain (TUBA1) of Pisum sativum (Garden pea).